Here is a 250-residue protein sequence, read N- to C-terminus: 3-deoxy-manno-octulosonate cytidylyltransferase (250 aa).

It belongs to the KdsB family.

The protein resides in the cytoplasm. The catalysed reaction is 3-deoxy-alpha-D-manno-oct-2-ulosonate + CTP = CMP-3-deoxy-beta-D-manno-octulosonate + diphosphate. It functions in the pathway nucleotide-sugar biosynthesis; CMP-3-deoxy-D-manno-octulosonate biosynthesis; CMP-3-deoxy-D-manno-octulosonate from 3-deoxy-D-manno-octulosonate and CTP: step 1/1. It participates in bacterial outer membrane biogenesis; lipopolysaccharide biosynthesis. Its function is as follows. Activates KDO (a required 8-carbon sugar) for incorporation into bacterial lipopolysaccharide in Gram-negative bacteria. In Thioalkalivibrio sulfidiphilus (strain HL-EbGR7), this protein is 3-deoxy-manno-octulosonate cytidylyltransferase.